We begin with the raw amino-acid sequence, 393 residues long: Potassium channel subfamily K member 4 (393 aa).

Residues 1–3 are Cytoplasmic-facing; sequence MRS. Residues 4–24 form a helical membrane-spanning segment; sequence TTLLALLALVLLYLVSGALVF. The Extracellular segment spans residues 25 to 87; that stretch reads RALEQPHEQQ…NSTSNSSHSA (63 aa). Residues N78 and N82 are each glycosylated (N-linked (GlcNAc...) asparagine). The segment at residues 88 to 102 is an intramembrane region (helical); it reads WDLGSAFFFSGTIIT. 4 residues coordinate K(+): T103, I104, G105, and Y106. The selectivity filter 1 stretch occupies residues 103-108; it reads TIGYGN. An intramembrane segment occupies 103–109; sequence TIGYGNV. Residues 110-117 lie on the Extracellular side of the membrane; the sequence is ALRTDAGR. Residues 118 to 150 form a helical membrane-spanning segment; the sequence is LFCIFYALVGIPLFGILLAGVGDRLGSSLRHGI. The Cytoplasmic segment spans residues 151-172; the sequence is GHIEAIFLKWHVPPELVRVLSA. A helical transmembrane segment spans residues 173 to 194; it reads MLFLLIGCLLFVLTPTFVFCYM. Over 195 to 199 the chain is Extracellular; it reads EDWSK. The segment at residues 200–213 is an intramembrane region (helical); sequence LEAIYFVIVTLTTV. Residues T212, V213, G214, and F215 each coordinate K(+). The selectivity filter 2 stretch occupies residues 212–217; sequence TVGFGD. The stretch at 214–219 is an intramembrane region; sequence GFGDYV. At 220–233 the chain is on the extracellular side; it reads AGADPRQDSPAYQP. A helical transmembrane segment spans residues 234–260; it reads LVWFWILLGLAYFASVLTTIGNWLRVV. Over 261–393 the chain is Cytoplasmic; it reads SRRTRAEMGG…GRPRDKGVPV (133 aa). Residues 285–393 form a disordered region; it reads RVTQRAGPAA…GRPRDKGVPV (109 aa). Positions 319 to 332 are enriched in pro residues; that stretch reads SPSPPEKAQPPSPP. Residues 365–384 show a composition bias toward basic residues; the sequence is PRGRRRPNPPRKPVRPRGPG.

The protein belongs to the two pore domain potassium channel (TC 1.A.1.8) family. In terms of assembly, homodimer; disulfide-linked. Forms heterodimers with other 2-pore domain K(+) channel subunits, such as KCNK2 and KCNK10. N-glycosylated.

It is found in the cell membrane. The protein localises to the cell projection. It localises to the axon. The enzyme catalyses K(+)(in) = K(+)(out). It catalyses the reaction Rb(+)(in) = Rb(+)(out). It carries out the reaction Cs(+)(in) = Cs(+)(out). Activated by mechanical stretch and arachidonic acid. In terms of biological role, k(+) channel that conducts voltage-dependent outward rectifying currents upon membrane depolarization. Voltage sensing is coupled to K(+) electrochemical gradient in an 'ion flux gating' mode where outward but not inward ion flow opens the gate. Converts to voltage-independent 'leak' conductance mode upon stimulation by various stimuli including mechanical membrane stretch, basic pH, heat and lipids. Homo- and heterodimerizes to form functional channels with distinct regulatory and gating properties. At trigeminal A-beta afferent nerves, the heterodimer of KCNK2/TREK-1 and KCNK4/TRAAK is mostly coexpressed at nodes of Ranvier where it conducts voltage-independent mechanosensitive and thermosensitive currents, allowing rapid action potential repolarization, high speed and high frequence saltatory conduction on myelinated nerves to ensure prompt sensory responses. Permeable to other monovalent cations such as Rb(+) and Cs(+). The chain is Potassium channel subfamily K member 4 from Homo sapiens (Human).